We begin with the raw amino-acid sequence, 28 residues long: Potassium channel toxin alpha-KTx 9.5 (28 aa).

Intrachain disulfides connect cysteine 3/cysteine 19, cysteine 6/cysteine 24, and cysteine 10/cysteine 26. Valine 28 is subject to Valine amide.

Expressed by the venom gland.

The protein resides in the secreted. Its function is as follows. Blocks voltage-gated potassium channels Kv1.1/KCNA1 (IC(50)=145 nM), Kv1.2/KCNA2 (IC(50)=2.5 nM), and Kv1.3/KCNA3 (IC(50)=15). Also inhibits calcium-activated potassium channels (KCa/KCNN). This Buthus occitanus tunetanus (Common European scorpion) protein is Potassium channel toxin alpha-KTx 9.5.